Consider the following 224-residue polypeptide: Transcriptional regulatory protein DltR (224 aa).

Residues Arg-2–Thr-116 form the Response regulatory domain. 4-aspartylphosphate is present on Asp-51. Residues Ala-124 to Glu-222 constitute a DNA-binding region (ompR/PhoB-type).

Phosphorylated by DltS.

The protein localises to the cytoplasm. Member of the two-component regulatory system DltS/DltR. Regulates the expression of the dlt operon. The chain is Transcriptional regulatory protein DltR (dltR) from Streptococcus agalactiae serotype III (strain NEM316).